Consider the following 223-residue polypeptide: Kynurenine formamidase (223 aa).

Substrate is bound at residue Phe-34. Zn(2+) contacts are provided by His-64, His-68, and Asp-70. The Proton donor/acceptor role is filled by His-74. Residues His-174 and Glu-186 each coordinate Zn(2+).

The protein belongs to the Cyclase 1 superfamily. KynB family. Homodimer. Zn(2+) is required as a cofactor.

It carries out the reaction N-formyl-L-kynurenine + H2O = L-kynurenine + formate + H(+). The protein operates within amino-acid degradation; L-tryptophan degradation via kynurenine pathway; L-kynurenine from L-tryptophan: step 2/2. Catalyzes the hydrolysis of N-formyl-L-kynurenine to L-kynurenine, the second step in the kynurenine pathway of tryptophan degradation. This Polaromonas naphthalenivorans (strain CJ2) protein is Kynurenine formamidase.